Consider the following 635-residue polypeptide: Early transcription factor 70 kDa subunit (635 aa).

Positions 32–185 constitute a Helicase ATP-binding domain; that stretch reads RSILDENNSV…SNIISIMSDE (154 aa). ATP is bound at residue 45–52; sequence HIMGSGKT. The DEXH box signature appears at 135 to 138; it reads DEAH.

This sequence belongs to the helicase family. VETF subfamily. In terms of assembly, heterodimer of a 70 kDa and a 82 kDa subunit. Part of the early transcription complex composed of ETF, RAP94, and the DNA-directed RNA polymerase.

Its subcellular location is the virion. Its function is as follows. Acts with RNA polymerase to initiate transcription from early gene promoters. Is recruited by the RPO-associated protein of 94 kDa (RAP94) to form the early transcription complex, which also contains the core RNA polymerase. ETF heterodimer binds to early gene promoters. The polypeptide is Early transcription factor 70 kDa subunit (VETFS) (Homo sapiens (Human)).